The primary structure comprises 445 residues: N-succinylarginine dihydrolase (445 aa).

Residues 19-28, asparagine 110, and 137-138 contribute to the substrate site; these read AGLSYGNVAS and HR. Residue glutamate 174 is part of the active site. Arginine 214 is a substrate binding site. Residue histidine 250 is part of the active site. Substrate-binding residues include aspartate 252 and asparagine 363. Cysteine 369 acts as the Nucleophile in catalysis.

Belongs to the succinylarginine dihydrolase family. In terms of assembly, homodimer.

The enzyme catalyses N(2)-succinyl-L-arginine + 2 H2O + 2 H(+) = N(2)-succinyl-L-ornithine + 2 NH4(+) + CO2. Its pathway is amino-acid degradation; L-arginine degradation via AST pathway; L-glutamate and succinate from L-arginine: step 2/5. Its function is as follows. Catalyzes the hydrolysis of N(2)-succinylarginine into N(2)-succinylornithine, ammonia and CO(2). The sequence is that of N-succinylarginine dihydrolase from Shewanella loihica (strain ATCC BAA-1088 / PV-4).